The chain runs to 149 residues: Large ribosomal subunit protein eL19 (149 aa).

Residues 45 to 130 are disordered; sequence VDEGAIQAKD…RDLYDKAGGG (86 aa). Over residues 58-85 the composition is skewed to basic residues; sequence NSRGRARERQKKRAYGHQKGAGSRKGKA. Basic and acidic residues predominate over residues 90–113; that stretch reads NSKEDWESRIRAQRTKLRELRDEG.

This sequence belongs to the eukaryotic ribosomal protein eL19 family. Part of the 50S ribosomal subunit.

Functionally, binds to the 23S rRNA. Located at the polypeptide exit tunnel on the outside of the subunit. This chain is Large ribosomal subunit protein eL19, found in Haloarcula marismortui (strain ATCC 43049 / DSM 3752 / JCM 8966 / VKM B-1809) (Halobacterium marismortui).